Consider the following 153-residue polypeptide: Movement protein (153 aa).

Disordered stretches follow at residues 1–24 (MAQE…EQDP) and 121–153 (PWVA…RNQR). Over residues 121–138 (PWVATLIPSQSAGPPQRS) the composition is skewed to polar residues.

It belongs to the luteoviruses movement protein family.

In terms of biological role, transports viral genome to neighboring plant cells directly through plasmosdesmata, without any budding. The movement protein allows efficient cell to cell propagation, by bypassing the host cell wall barrier. The protein is Movement protein of Avena byzantina (Oat).